A 1026-amino-acid polypeptide reads, in one-letter code: Translation initiation factor IF-2, chloroplastic (1026 aa).

A chloroplast-targeting transit peptide spans 1–63 (MPSMLVLVGT…KKWLCRYSVS (63 aa)). The segment covering 158 to 173 (AEKLEIPKPGNKEGGE) has biased composition (basic and acidic residues). Disordered regions lie at residues 158–208 (AEKL…TMKS), 230–284 (FNRG…PPVK), and 300–393 (VSEE…KWSK). Polar residues predominate over residues 178 to 194 (SQPSANSSNSRNGSYAN). A compositionally biased stretch (pro residues) spans 254-269 (LAPPQPPFRPQPPVRP). The segment covering 306 to 317 (SSVKSKERKPIL) has biased composition (basic and acidic residues). Positions 384-393 (SGRKGRKWSK) are enriched in basic residues. The region spanning 499-672 (DRPPVITIMG…MLVAELQELK (174 aa)) is the tr-type G domain. A G1 region spans residues 508-515 (GHVDHGKT). 508–515 (GHVDHGKT) contributes to the GTP binding site. Positions 533-537 (GITQG) are G2. Positions 558–561 (DTPG) are G3. GTP is bound by residues 558 to 562 (DTPGH) and 612 to 615 (NKID). The G4 stretch occupies residues 612-615 (NKID). The G5 stretch occupies residues 648–650 (SAL).

The protein belongs to the TRAFAC class translation factor GTPase superfamily. Classic translation factor GTPase family. IF-2 subfamily.

It localises to the plastid. Its subcellular location is the chloroplast. Its function is as follows. One of the essential components for the initiation of protein synthesis. Protects formylmethionyl-tRNA from spontaneous hydrolysis and promotes its binding to the 30S ribosomal subunits. Also involved in the hydrolysis of GTP during the formation of the 70S ribosomal complex. In Arabidopsis thaliana (Mouse-ear cress), this protein is Translation initiation factor IF-2, chloroplastic.